The chain runs to 1387 residues: DNA-directed RNA polymerase subunit beta'' (1387 aa).

Positions 220, 291, 298, and 301 each coordinate Zn(2+).

It belongs to the RNA polymerase beta' chain family. RpoC2 subfamily. In terms of assembly, in plastids the minimal PEP RNA polymerase catalytic core is composed of four subunits: alpha, beta, beta', and beta''. When a (nuclear-encoded) sigma factor is associated with the core the holoenzyme is formed, which can initiate transcription. It depends on Zn(2+) as a cofactor.

It localises to the plastid. It is found in the chloroplast. The catalysed reaction is RNA(n) + a ribonucleoside 5'-triphosphate = RNA(n+1) + diphosphate. Its function is as follows. DNA-dependent RNA polymerase catalyzes the transcription of DNA into RNA using the four ribonucleoside triphosphates as substrates. The chain is DNA-directed RNA polymerase subunit beta'' from Carica papaya (Papaya).